The sequence spans 494 residues: MFTMDDLNQMDTQTLTDTLGSIFEHSSWIAERSAALRPFSSLSDLHRKMTGIVKAADRETQLDLIKKHPRLGTKKTMSDDSVREQQNAGLGKLEQQEYEEFLMLNEHYYDRFGFPFILAVKGKTKQDIHQALLARLESERETEFQQALIEIYRIARFRLADIITEKGETQMKRTMSYGKGNVFAYRTYLKPLTGVKQIPESSFAGRDNTVVGVDVTCEIGGEAFLPSFTDGDNTLVVATDSMKNFIQRHLASYEGTTTEGFLHYVAHRFLDTYSHMDTITLTGEDIPFEAMPAYEEKELSTSRLVFRRSRNERSRSVLKAERSGNTITITEQYSEIMDLQLVKVSGNSFVGFIRDEYTTLPEDGNRPLFVYLNISWQYENTNDSYASDPARYVAAEQVRDLASTVFHELETPSIQNLIYHIGCRILARFPQLTDVSFQSQNHTWDTVVEEIPGSKGKVYTEPRPPYGFQHFTVTREDAEKEKQKAAEKCRSLKA.

The OHCU decarboxylase stretch occupies residues 1–174 (MFTMDDLNQM…EKGETQMKRT (174 aa)). The active-site Proton donor; for OHCU decarboxylase activity is H68. 5-hydroxy-2-oxo-4-ureido-2,5-dihydro-1H-imidazole-5-carboxylate-binding positions include P69, 81-85 (SVREQ), and 116-120 (FILAV). Residues 175 to 494 (MSYGKGNVFA…AAEKCRSLKA (320 aa)) are urate oxidase. Catalysis depends on K179, which acts as the Charge relay system; for urate oxidase activity. K190 acts as the Charge relay system in catalysis. Residue T239 is the Charge relay system; for urate oxidase activity of the active site. Residues T239, D240, F349, R366, I414, Q415, and N441 each coordinate urate.

This sequence in the N-terminal section; belongs to the OHCU decarboxylase family. It in the C-terminal section; belongs to the uricase family.

It catalyses the reaction 5-hydroxy-2-oxo-4-ureido-2,5-dihydro-1H-imidazole-5-carboxylate + H(+) = (S)-allantoin + CO2. The catalysed reaction is urate + O2 + H2O = 5-hydroxyisourate + H2O2. It participates in purine metabolism; urate degradation; (S)-allantoin from urate: step 1/3. Its pathway is purine metabolism; urate degradation; (S)-allantoin from urate: step 3/3. Catalyzes two steps in the degradation of uric acid, i.e. the oxidation of uric acid to 5-hydroxyisourate (HIU) and the stereoselective decarboxylation of 2-oxo-4-hydroxy-4-carboxy-5-ureidoimidazoline (OHCU) to (S)-allantoin. The sequence is that of Uric acid degradation bifunctional protein PucL (pucL) from Bacillus subtilis (strain 168).